A 466-amino-acid polypeptide reads, in one-letter code: Endoglucanase E-5 (466 aa).

A signal peptide spans 1–36 (MAKSPAARKGXPPVAVAVTAALALLIALLSPGVAQA). The 103-residue stretch at 37 to 139 (AGLTATVTKE…TINGAPCDEG (103 aa)) folds into the CBM2 domain. The segment at 129–166 (CTINGAPCDEGSEPGGPGGPGTPSPDPGTQPGTGTPVE) is disordered. E299 functions as the Proton donor in the catalytic mechanism. E391 serves as the catalytic Nucleophile.

Belongs to the glycosyl hydrolase 5 (cellulase A) family.

The catalysed reaction is Endohydrolysis of (1-&gt;4)-beta-D-glucosidic linkages in cellulose, lichenin and cereal beta-D-glucans.. The protein operates within glycan metabolism; cellulose degradation. The polypeptide is Endoglucanase E-5 (celE) (Thermobifida fusca (Thermomonospora fusca)).